The chain runs to 198 residues: Recombination protein RecR (198 aa).

The C4-type zinc-finger motif lies at 57–72; it reads CSVCGHITENDPCYIC. The 96-residue stretch at 80-175 folds into the Toprim domain; sequence SVICVVEDDK…KVTRLAQGLS (96 aa).

Belongs to the RecR family.

Functionally, may play a role in DNA repair. It seems to be involved in an RecBC-independent recombinational process of DNA repair. It may act with RecF and RecO. The sequence is that of Recombination protein RecR from Staphylococcus aureus (strain Mu3 / ATCC 700698).